A 403-amino-acid chain; its full sequence is Arginine biosynthesis bifunctional protein ArgJ (403 aa).

A compositionally biased stretch (polar residues) spans 1–11 (MVQSVLSSTSH). A disordered region spans residues 1 to 21 (MVQSVLSSTSHGSERADMSAA). Positions 161, 183, 194, 273, 398, and 403 each coordinate substrate. Thr-194 (nucleophile) is an active-site residue.

Belongs to the ArgJ family. Heterotetramer of two alpha and two beta chains.

It localises to the cytoplasm. The catalysed reaction is N(2)-acetyl-L-ornithine + L-glutamate = N-acetyl-L-glutamate + L-ornithine. It catalyses the reaction L-glutamate + acetyl-CoA = N-acetyl-L-glutamate + CoA + H(+). The protein operates within amino-acid biosynthesis; L-arginine biosynthesis; L-ornithine and N-acetyl-L-glutamate from L-glutamate and N(2)-acetyl-L-ornithine (cyclic): step 1/1. Its pathway is amino-acid biosynthesis; L-arginine biosynthesis; N(2)-acetyl-L-ornithine from L-glutamate: step 1/4. Catalyzes two activities which are involved in the cyclic version of arginine biosynthesis: the synthesis of N-acetylglutamate from glutamate and acetyl-CoA as the acetyl donor, and of ornithine by transacetylation between N(2)-acetylornithine and glutamate. This is Arginine biosynthesis bifunctional protein ArgJ from Rhodococcoides fascians (Rhodococcus fascians).